Consider the following 226-residue polypeptide: MDGIHDLGGRAGLGPIKPESDEPVFHSDWERSVLTMFPAMALAGAFNLDQFRGAMEQIPPHDYLTSQYYEHWMHAMIHHGIEAGIFDSDELDRRTQYYMDHPDDTTPTRQDPQLVETISQLITHGADYRRPTDTEAAFAVGDKVIVRSDASPNTHTRRAGYVRGRVGEVVATHGAYVFPDTNALGAGESPEHLYTVRFSATELWGEPAAPNVVNHIDVFEPYLLPA.

Residues 1 to 22 are disordered; that stretch reads MDGIHDLGGRAGLGPIKPESDE.

This sequence belongs to the nitrile hydratase subunit beta family. Heterodimer of an alpha and a beta chain.

The enzyme catalyses an aliphatic primary amide = an aliphatic nitrile + H2O. In terms of biological role, NHase catalyzes the hydration of various nitrile compounds to the corresponding amides. The chain is Low-molecular weight cobalt-containing nitrile hydratase subunit beta from Rhodococcus rhodochrous.